The sequence spans 218 residues: ATP phosphoribosyltransferase (218 aa).

It belongs to the ATP phosphoribosyltransferase family. Short subfamily. Heteromultimer composed of HisG and HisZ subunits.

The protein resides in the cytoplasm. The catalysed reaction is 1-(5-phospho-beta-D-ribosyl)-ATP + diphosphate = 5-phospho-alpha-D-ribose 1-diphosphate + ATP. It functions in the pathway amino-acid biosynthesis; L-histidine biosynthesis; L-histidine from 5-phospho-alpha-D-ribose 1-diphosphate: step 1/9. Its function is as follows. Catalyzes the condensation of ATP and 5-phosphoribose 1-diphosphate to form N'-(5'-phosphoribosyl)-ATP (PR-ATP). Has a crucial role in the pathway because the rate of histidine biosynthesis seems to be controlled primarily by regulation of HisG enzymatic activity. The protein is ATP phosphoribosyltransferase of Acaryochloris marina (strain MBIC 11017).